The chain runs to 452 residues: NADH-ubiquinone oxidoreductase chain 4 (452 aa).

A run of 14 helical transmembrane segments spans residues 4–24 (LVLGYVGLVIGVIVTKKSMVW), 29–49 (VGSVLLMLPATVLVNMNMTIS), 59–79 (FVSLGLTVLSIWLLPLMLLAS), 88–110 (LIYQRVFVGCQVFLTGALVLAFM), 114–136 (LLLFYIAFESTLLPTLMLITRWG), 144–164 (AGTYFMFFTLVGSLPLLICLI), 182–202 (VFQLSYLVNFWWVGCILAFLV), 221–241 (PIAGSMVLAGVLLKLGGYGMM), 252–272 (MLSSEVFLALALWGIVVMGGI), 282–304 (LIAYSSVGHMALVVGGVLTGVAW), 309–331 (AMVLMIAHGLVSSCLFCLANLWY), 345–365 (LIMIFPLISLGWFLMSLMNMA), 390–410 (IVYMSLGAVLTAAYSLYLFGM), and 432–452 (LLTTLHLVPAIYLIFYLGLMF).

The protein belongs to the complex I subunit 4 family.

It localises to the mitochondrion membrane. It carries out the reaction a ubiquinone + NADH + 5 H(+)(in) = a ubiquinol + NAD(+) + 4 H(+)(out). Its function is as follows. Core subunit of the mitochondrial membrane respiratory chain NADH dehydrogenase (Complex I) that is believed to belong to the minimal assembly required for catalysis. Complex I functions in the transfer of electrons from NADH to the respiratory chain. The immediate electron acceptor for the enzyme is believed to be ubiquinone. The protein is NADH-ubiquinone oxidoreductase chain 4 (ND4) of Branchiostoma lanceolatum (Common lancelet).